Consider the following 330-residue polypeptide: Uracil-DNA glycosylase, mitochondrial (330 aa).

Residues 1-49 (MASSTPKTLMDFFQPAKRLKASPSSSSFPAVSVAGGSRDLGSVANSPPR) constitute a mitochondrion transit peptide. The active-site Proton acceptor is aspartate 173.

The protein belongs to the uracil-DNA glycosylase (UDG) superfamily. UNG family.

Its subcellular location is the mitochondrion. It catalyses the reaction Hydrolyzes single-stranded DNA or mismatched double-stranded DNA and polynucleotides, releasing free uracil.. Its activity is regulated as follows. Inhidited by the small peptide uracil-DNA-glycosylase inhibitor (Ugi). In terms of biological role, excises uracil residues from the DNA which can arise as a result of misincorporation of dUMP residues by DNA polymerase or due to deamination of cytosine. More active on U:G, U:T and U:C mispairs than on U:A pairs. Highly specific for uracil and no activity with 5-substituted uracil or cytosine derivatives. Required for initiation of base excision repair (BER) of uracil. The sequence is that of Uracil-DNA glycosylase, mitochondrial from Arabidopsis thaliana (Mouse-ear cress).